We begin with the raw amino-acid sequence, 119 residues long: Ribonuclease P protein component (119 aa).

This sequence belongs to the RnpA family. Consists of a catalytic RNA component (M1 or rnpB) and a protein subunit.

The enzyme catalyses Endonucleolytic cleavage of RNA, removing 5'-extranucleotides from tRNA precursor.. RNaseP catalyzes the removal of the 5'-leader sequence from pre-tRNA to produce the mature 5'-terminus. It can also cleave other RNA substrates such as 4.5S RNA. The protein component plays an auxiliary but essential role in vivo by binding to the 5'-leader sequence and broadening the substrate specificity of the ribozyme. The sequence is that of Ribonuclease P protein component from Listeria monocytogenes serotype 4a (strain HCC23).